We begin with the raw amino-acid sequence, 462 residues long: Proline--tRNA ligase (462 aa).

This sequence belongs to the class-II aminoacyl-tRNA synthetase family. ProS type 3 subfamily. In terms of assembly, homodimer.

The protein resides in the cytoplasm. The catalysed reaction is tRNA(Pro) + L-proline + ATP = L-prolyl-tRNA(Pro) + AMP + diphosphate. Functionally, catalyzes the attachment of proline to tRNA(Pro) in a two-step reaction: proline is first activated by ATP to form Pro-AMP and then transferred to the acceptor end of tRNA(Pro). This chain is Proline--tRNA ligase, found in Thermoplasma acidophilum (strain ATCC 25905 / DSM 1728 / JCM 9062 / NBRC 15155 / AMRC-C165).